Reading from the N-terminus, the 231-residue chain is UPF0758 protein aq_1610 (231 aa).

The MPN domain occupies 110-231; it reads SIRNPQEAFE…YFSFREEGVL (122 aa). Residues H180, H182, and D193 each contribute to the Zn(2+) site. The JAMM motif signature appears at 180–193; that stretch reads HNHPQGEPSPSNED.

The protein belongs to the UPF0758 family.

The protein is UPF0758 protein aq_1610 of Aquifex aeolicus (strain VF5).